A 98-amino-acid polypeptide reads, in one-letter code: Homeobox protein SMOX-4 (98 aa).

The segment at residues 37 to 96 (SFRNRTAFTDYQLICLEREFSHIQYLSRIDRIHLAQNLNLTEKQVKIWFQNRRVRWRKRN) is a DNA-binding region (homeobox).

It is found in the nucleus. The chain is Homeobox protein SMOX-4 (SMOX-4) from Schistosoma mansoni (Blood fluke).